Here is a 156-residue protein sequence, read N- to C-terminus: Cell division protein SepF (156 aa).

The protein belongs to the SepF family. Homodimer. Interacts with FtsZ.

The protein resides in the cytoplasm. In terms of biological role, cell division protein that is part of the divisome complex and is recruited early to the Z-ring. Probably stimulates Z-ring formation, perhaps through the cross-linking of FtsZ protofilaments. Its function overlaps with FtsA. The sequence is that of Cell division protein SepF from Bacillus cytotoxicus (strain DSM 22905 / CIP 110041 / 391-98 / NVH 391-98).